Here is a 205-residue protein sequence, read N- to C-terminus: Probable GTP-binding protein EngB (205 aa).

The 175-residue stretch at 27-201 (SGIEIAFAGR…AAKLDSWFAP (175 aa)) folds into the EngB-type G domain. GTP contacts are provided by residues 35 to 42 (GRSNAGKS), 62 to 66 (GRTQL), 80 to 83 (DLPG), 147 to 150 (TKAD), and 180 to 182 (FSA). Positions 42 and 64 each coordinate Mg(2+).

This sequence belongs to the TRAFAC class TrmE-Era-EngA-EngB-Septin-like GTPase superfamily. EngB GTPase family. Mg(2+) serves as cofactor.

Necessary for normal cell division and for the maintenance of normal septation. The chain is Probable GTP-binding protein EngB from Pasteurella multocida (strain Pm70).